The following is a 454-amino-acid chain: Transmembrane protein adipocyte-associated 1 homolog (454 aa).

N-linked (GlcNAc...) asparagine glycosylation is found at asparagine 26 and asparagine 44. The next 5 helical transmembrane spans lie at 80 to 100 (AILI…TSVI), 113 to 133 (AFTL…VYSM), 151 to 171 (IIIK…GLLF), 180 to 200 (ILIA…VQVI), and 224 to 244 (FVFW…IMCL). Asparagine 258 carries an N-linked (GlcNAc...) asparagine glycan. A run of 2 helical transmembrane segments spans residues 262–282 (FIYC…AALI) and 290–310 (LCFV…IIYF). Asparagine 322 and asparagine 323 each carry an N-linked (GlcNAc...) asparagine glycan. The tract at residues 408 to 454 (RTGSDDFAHHRDSMLSEPSTGTTTRHLKGLGPQGSLVFEEDPSSLRL) is disordered. Residues 410-421 (GSDDFAHHRDSM) show a composition bias toward basic and acidic residues. Residues 445-454 (FEEDPSSLRL) are compositionally biased toward acidic residues.

Belongs to the UPF0359 family.

The protein resides in the membrane. This Caenorhabditis briggsae protein is Transmembrane protein adipocyte-associated 1 homolog (tpra-1).